The sequence spans 169 residues: ATP synthase subunit b, sodium ion specific (169 aa).

The chain crosses the membrane as a helical span at residues 5–27; sequence SFISLDWGVVFQIVNTIVMYLIL.

This sequence belongs to the ATPase B chain family. As to quaternary structure, F-type ATPases have 2 components, F(1) - the catalytic core - and F(0) - the membrane proton channel. F(1) has five subunits: alpha(3), beta(3), gamma(1), delta(1), epsilon(1). F(0) has three main subunits: a(1), b(2) and c(10-14). The alpha and beta chains form an alternating ring which encloses part of the gamma chain. F(1) is attached to F(0) by a central stalk formed by the gamma and epsilon chains, while a peripheral stalk is formed by the delta and b chains.

The protein localises to the cell membrane. F(1)F(0) ATP synthase produces ATP from ADP in the presence of a proton or sodium gradient. F-type ATPases consist of two structural domains, F(1) containing the extramembraneous catalytic core and F(0) containing the membrane proton channel, linked together by a central stalk and a peripheral stalk. During catalysis, ATP synthesis in the catalytic domain of F(1) is coupled via a rotary mechanism of the central stalk subunits to proton translocation. Its function is as follows. Component of the F(0) channel, it forms part of the peripheral stalk, linking F(1) to F(0). In terms of biological role, in this organism this enzyme may function as an ATP-driven Na(+) ion pump to generate a Na(+) ion electrochemical gradient rather than as an ATP synthase. The sequence is that of ATP synthase subunit b, sodium ion specific (atpF) from Clostridium paradoxum.